The primary structure comprises 386 residues: Enamidase (386 aa).

Zn(2+)-binding residues include His-67, His-69, and Glu-164. Fe cation contacts are provided by Glu-164, His-193, and His-220. A Zn(2+)-binding site is contributed by Asp-276.

As to quaternary structure, homotetramer. Dimer of dimers. It depends on Fe cation as a cofactor. Requires Zn(2+) as cofactor.

It carries out the reaction 1,4,5,6-tetrahydro-6-oxonicotinate + 2 H2O = 2-formylglutarate + NH4(+). It functions in the pathway cofactor degradation; nicotinate degradation; propanoate and pyruvate from 6-hydroxynicotinate: step 2/8. Its function is as follows. Decyclization of 6-oxo-1,4,5,6-tetrahydronicotinate to form 2-(enamine)glutarate, followed by hydrolysis to form (S)-2-formylglutarate. The sequence is that of Enamidase from Eubacterium barkeri (Clostridium barkeri).